The chain runs to 427 residues: 3-phosphoshikimate 1-carboxyvinyltransferase (427 aa).

The 3-phosphoshikimate site is built by K22, S23, and R27. Position 22 (K22) interacts with phosphoenolpyruvate. G96 and R124 together coordinate phosphoenolpyruvate. 3-phosphoshikimate contacts are provided by S169, S170, Q171, S197, D313, N336, and K340. Q171 contributes to the phosphoenolpyruvate binding site. Catalysis depends on D313, which acts as the Proton acceptor. Residues R344, R386, and K411 each contribute to the phosphoenolpyruvate site.

Belongs to the EPSP synthase family. In terms of assembly, monomer.

Its subcellular location is the cytoplasm. The enzyme catalyses 3-phosphoshikimate + phosphoenolpyruvate = 5-O-(1-carboxyvinyl)-3-phosphoshikimate + phosphate. It functions in the pathway metabolic intermediate biosynthesis; chorismate biosynthesis; chorismate from D-erythrose 4-phosphate and phosphoenolpyruvate: step 6/7. Its function is as follows. Catalyzes the transfer of the enolpyruvyl moiety of phosphoenolpyruvate (PEP) to the 5-hydroxyl of shikimate-3-phosphate (S3P) to produce enolpyruvyl shikimate-3-phosphate and inorganic phosphate. The polypeptide is 3-phosphoshikimate 1-carboxyvinyltransferase (Escherichia coli (strain SMS-3-5 / SECEC)).